Consider the following 102-residue polypeptide: Large ribosomal subunit protein uL23c (102 aa).

This sequence belongs to the universal ribosomal protein uL23 family. As to quaternary structure, part of the 50S ribosomal subunit.

It localises to the plastid. It is found in the chloroplast. Functionally, binds to 23S rRNA. The chain is Large ribosomal subunit protein uL23c (rpl23) from Trieres chinensis (Marine centric diatom).